The sequence spans 371 residues: 2-aminoethylphosphonate--pyruvate transaminase (371 aa).

N6-(pyridoxal phosphate)lysine is present on K195.

The protein belongs to the class-V pyridoxal-phosphate-dependent aminotransferase family. PhnW subfamily. As to quaternary structure, homotetramer; however this is for an enzyme with a molecular weight of 16500, which is in disagreement with the weight of this protein. The cofactor is pyridoxal 5'-phosphate.

It carries out the reaction (2-aminoethyl)phosphonate + pyruvate = phosphonoacetaldehyde + L-alanine. Its activity is regulated as follows. Inhibited by phosphonic acids and very slightly inhibited by aminophosphonic acids. Functionally, involved in phosphonate degradation. The sequence is that of 2-aminoethylphosphonate--pyruvate transaminase (phnW) from Pseudomonas aeruginosa (strain ATCC 15692 / DSM 22644 / CIP 104116 / JCM 14847 / LMG 12228 / 1C / PRS 101 / PAO1).